The primary structure comprises 271 residues: 4-hydroxy-tetrahydrodipicolinate reductase (271 aa).

10–15 (GAAGRM) serves as a coordination point for NAD(+). Arginine 37 contributes to the NADP(+) binding site. NAD(+)-binding positions include 100-102 (GTT) and 124-127 (SGNM). Histidine 157 (proton donor/acceptor) is an active-site residue. Histidine 158 contacts (S)-2,3,4,5-tetrahydrodipicolinate. Lysine 161 functions as the Proton donor in the catalytic mechanism. 167 to 168 (GT) is a (S)-2,3,4,5-tetrahydrodipicolinate binding site. The disordered stretch occupies residues 183–202 (SLSEHEQRGRDGHTGPRKDG). Residues 185-202 (SEHEQRGRDGHTGPRKDG) show a composition bias toward basic and acidic residues.

The protein belongs to the DapB family.

It localises to the cytoplasm. It carries out the reaction (S)-2,3,4,5-tetrahydrodipicolinate + NAD(+) + H2O = (2S,4S)-4-hydroxy-2,3,4,5-tetrahydrodipicolinate + NADH + H(+). It catalyses the reaction (S)-2,3,4,5-tetrahydrodipicolinate + NADP(+) + H2O = (2S,4S)-4-hydroxy-2,3,4,5-tetrahydrodipicolinate + NADPH + H(+). The protein operates within amino-acid biosynthesis; L-lysine biosynthesis via DAP pathway; (S)-tetrahydrodipicolinate from L-aspartate: step 4/4. Its function is as follows. Catalyzes the conversion of 4-hydroxy-tetrahydrodipicolinate (HTPA) to tetrahydrodipicolinate. This Beijerinckia indica subsp. indica (strain ATCC 9039 / DSM 1715 / NCIMB 8712) protein is 4-hydroxy-tetrahydrodipicolinate reductase.